The sequence spans 70 residues: Protein SlyX homolog (70 aa).

Belongs to the SlyX family.

This chain is Protein SlyX homolog, found in Shewanella piezotolerans (strain WP3 / JCM 13877).